The sequence spans 101 residues: Cilia- and flagella-associated protein 141 (101 aa).

Microtubule inner protein component of sperm flagellar doublet microtubules. Expressed in trachea multiciliated cells.

It localises to the cytoplasm. It is found in the cytoskeleton. The protein resides in the cilium axoneme. The protein localises to the flagellum axoneme. Microtubule inner protein (MIP) part of the dynein-decorated doublet microtubules (DMTs) in cilia axoneme, which is required for motile cilia beating. The protein is Cilia- and flagella-associated protein 141 of Bos taurus (Bovine).